Here is a 325-residue protein sequence, read N- to C-terminus: Transcription initiation factor IIB (325 aa).

A TFIIB-type zinc finger spans residues Asn-19–Gly-52. Positions 23, 26, 44, and 47 each coordinate Zn(2+). 2 tandem repeats follow at residues Met-131 to Glu-207 and Phe-227 to Ala-303.

The protein belongs to the TFIIB family.

The protein resides in the nucleus. General transcription factor that plays a role in transcription initiation by RNA polymerase II (Pol II). Involved in the pre-initiation complex (PIC) formation and Pol II recruitment at promoter DNA. The protein is Transcription initiation factor IIB (gtf2b) of Dictyostelium discoideum (Social amoeba).